A 490-amino-acid polypeptide reads, in one-letter code: Glucose-6-phosphate 1-dehydrogenase (490 aa).

NADP(+) contacts are provided by residues Arg48, 90 to 91 (DI), and Lys145. The substrate site is built by His175, Lys179, Glu213, and Asp232. His237 functions as the Proton acceptor in the catalytic mechanism. Substrate contacts are provided by Lys340 and Lys345.

The protein belongs to the glucose-6-phosphate dehydrogenase family.

The enzyme catalyses D-glucose 6-phosphate + NADP(+) = 6-phospho-D-glucono-1,5-lactone + NADPH + H(+). Its pathway is carbohydrate degradation; pentose phosphate pathway; D-ribulose 5-phosphate from D-glucose 6-phosphate (oxidative stage): step 1/3. Its function is as follows. Catalyzes the oxidation of glucose 6-phosphate to 6-phosphogluconolactone. This is Glucose-6-phosphate 1-dehydrogenase from Buchnera aphidicola subsp. Baizongia pistaciae (strain Bp).